Here is a 277-residue protein sequence, read N- to C-terminus: Secoisolariciresinol dehydrogenase (277 aa).

Residues 24–29, D48, V73, and N99 contribute to the NAD(+) site; that span reads GGASGI. S163 contacts substrate. Catalysis depends on Y166, which acts as the Proton donor/acceptor. K170 provides a ligand contact to NAD(+).

Belongs to the short-chain dehydrogenases/reductases (SDR) family. As to quaternary structure, homotetramer.

The enzyme catalyses (-)-secoisolariciresinol + 2 NAD(+) = (-)-matairesinol + 2 NADH + 2 H(+). Functionally, oxidoreductase involved in lignan biosynthesis. Catalyzes the stereospecific conversion of (-)-secoisolariciresinol to (-)-matairesinol via a lactol intermediate. In Forsythia intermedia (Border forsythia), this protein is Secoisolariciresinol dehydrogenase.